Reading from the N-terminus, the 134-residue chain is Small ribosomal subunit protein uS8c (134 aa).

It belongs to the universal ribosomal protein uS8 family. Part of the 30S ribosomal subunit.

It is found in the plastid. Functionally, one of the primary rRNA binding proteins, it binds directly to 16S rRNA central domain where it helps coordinate assembly of the platform of the 30S subunit. The polypeptide is Small ribosomal subunit protein uS8c (rps8) (Cuscuta gronovii (Common dodder)).